Reading from the N-terminus, the 784-residue chain is Rabenosyn-5 (784 aa).

An N-acetylalanine modification is found at Ala-2. A Phosphoserine modification is found at Ser-3. The C2H2-type zinc finger occupies 14–37 (FLCPLCLKDLQSFYQLHSHYEEEH). The necessary for the correct targeting to endosomes stretch occupies residues 100-263 (RSHLSDFKKH…HCKDTLLKRE (164 aa)). The segment at 157–260 (DQDVPFCPDC…CCTHCKDTLL (104 aa)) adopts an FYVE-type zinc-finger fold. Cys-163, Cys-166, Cys-179, Cys-182, Cys-187, and Cys-190 together coordinate Zn(2+). Positions 207 to 224 (KESLSTHTSPSQSPNSVH) are enriched in polar residues. The tract at residues 207 to 241 (KESLSTHTSPSQSPNSVHGSRRGSISSMSSVSSVL) is disordered. Phosphoserine occurs at positions 215, 219, 226, and 230. The span at 228 to 240 (RGSISSMSSVSSV) shows a compositional bias: low complexity. Residues Cys-252 and Cys-255 each coordinate Zn(2+). The interval 264–500 (QQIDEKEHTP…QLQDEYDQQQ (237 aa)) is necessary for interaction with RAB4A. The segment at 264–784 (QQIDEKEHTP…TLAKQKGGTD (521 aa)) is necessary for interaction with EHD1. 2 coiled-coil regions span residues 378–414 (TKEQ…LEER) and 472–531 (QAKA…RELE). The span at 390–400 (KEEMERKRAVE) shows a compositional bias: basic and acidic residues. The interval 390-429 (KEEMERKRAVERQAALESQRRLEERQSGLASRAANGEVAS) is disordered. One can recognise a UIM domain in the interval 496-515 (YDQQQTEKAIELSRRQAEEE). The segment at 574–732 (DLGSSPVPSS…DSDSGPEAEE (159 aa)) is disordered. Positions 579–598 (PVPSSTAPKTPSLSSTQPTR) are enriched in polar residues. The tract at residues 627–784 (PFDEEDLSSP…TLAKQKGGTD (158 aa)) is necessary for interaction with RAB5A. Residues 663-673 (PFEEEDEEEEA) are compositionally biased toward acidic residues. Ser-684 bears the Phosphoserine mark. Acidic residues predominate over residues 722-732 (MDSDSGPEAEE).

In terms of assembly, interacts with EHD1, RAB4A, RAB5A, RAB14, RAB22A, RAB24 and VPS45. Binds simultaneously to RAB4A and RAB5A in vitro. Interacts with RAB4A and RAB5A that has been activated by GTP binding.

It localises to the cell membrane. Its subcellular location is the early endosome membrane. In terms of biological role, rab4/Rab5 effector protein acting in early endocytic membrane fusion and membrane trafficking of recycling endosomes. Required for endosome fusion either homotypically or with clathrin coated vesicles. Plays a role in the lysosomal trafficking of CTSD/cathepsin D from the Golgi to lysosomes. Also promotes the recycling of transferrin directly from early endosomes to the plasma membrane. Binds phospholipid vesicles containing phosphatidylinositol 3-phosphate (PtdInsP3). Plays a role in the recycling of transferrin receptor to the plasma membrane. The chain is Rabenosyn-5 from Homo sapiens (Human).